A 247-amino-acid polypeptide reads, in one-letter code: 14-3-3 protein gamma-A (247 aa).

The protein belongs to the 14-3-3 family. In terms of assembly, homodimer, and heterodimer with other family members.

The protein localises to the cytoplasm. In terms of biological role, adapter protein implicated in the regulation of a large spectrum of both general and specialized signaling pathways. Binds to a large number of partners, usually by recognition of a phosphoserine or phosphothreonine motif. Binding generally results in the modulation of the activity of the binding partner. The polypeptide is 14-3-3 protein gamma-A (ywhag-a) (Xenopus laevis (African clawed frog)).